Consider the following 630-residue polypeptide: PR domain zinc finger protein 5 (630 aa).

An SET domain is found at 8-124 (DRFSLKSSRV…TDTELLIGYL (117 aa)). A C2H2-type 1 zinc finger spans residues 167–190 (YACPQCESSFTSEDILAEHLQTLH). Residues 199–221 (FKCKNCGKKFPVKQALQRHVLQC) form a C2H2-type 2; atypical zinc finger. A C2H2-type 3; atypical zinc finger spans residues 234–256 (FQCSVCNSSFSSASSFEQHQETC). C2H2-type zinc fingers lie at residues 262-287 (FVCK…ENVH), 295-317 (LICS…RKIH), 320-342 (FDCQ…MITH), 348-370 (YNCE…KVIH), 376-398 (YKCK…KKTH), 404-426 (FQCE…LLIH), 432-455 (FKCH…QVVH), 461-483 (YRCE…KKTH), 489-511 (KICP…IRSH), 517-539 (YQCP…IRTH), 545-567 (YKCS…KRTH), 573-595 (FQCD…KMTH), and 602-625 (AECQ…DNIH).

Belongs to the class V-like SAM-binding methyltransferase superfamily. Interacts with EHMT2/G9A, GFI1 and HDAC1. In terms of tissue distribution, widely expressed with highest levels in colon and ovary. Tends to be silenced in breast, colorectal, gastric and liver cancer tissues.

Its subcellular location is the nucleus. Functionally, sequence-specific DNA-binding transcription factor. Represses transcription at least in part by recruitment of the histone methyltransferase EHMT2/G9A and histone deacetylases such as HDAC1. Regulates hematopoiesis-associated protein-coding and microRNA (miRNA) genes. May regulate the expression of proteins involved in extracellular matrix development and maintenance, including fibrillar collagens, such as COL4A1 and COL11A1, connective tissue components, such as HAPLN1, and molecules regulating cell migration and adhesion, including EDIL3 and TGFB2. May cause G2/M arrest and apoptosis in cancer cells. The polypeptide is PR domain zinc finger protein 5 (PRDM5) (Homo sapiens (Human)).